Here is a 473-residue protein sequence, read N- to C-terminus: ATP synthase subunit beta (473 aa).

G158–T165 lines the ATP pocket.

Belongs to the ATPase alpha/beta chains family. F-type ATPases have 2 components, CF(1) - the catalytic core - and CF(0) - the membrane proton channel. CF(1) has five subunits: alpha(3), beta(3), gamma(1), delta(1), epsilon(1). CF(0) has three main subunits: a(1), b(2) and c(9-12). The alpha and beta chains form an alternating ring which encloses part of the gamma chain. CF(1) is attached to CF(0) by a central stalk formed by the gamma and epsilon chains, while a peripheral stalk is formed by the delta and b chains.

Its subcellular location is the cell membrane. It carries out the reaction ATP + H2O + 4 H(+)(in) = ADP + phosphate + 5 H(+)(out). Functionally, produces ATP from ADP in the presence of a proton gradient across the membrane. The catalytic sites are hosted primarily by the beta subunits. The sequence is that of ATP synthase subunit beta from Bacillus licheniformis (strain ATCC 14580 / DSM 13 / JCM 2505 / CCUG 7422 / NBRC 12200 / NCIMB 9375 / NCTC 10341 / NRRL NRS-1264 / Gibson 46).